Reading from the N-terminus, the 231-residue chain is Large ribosomal subunit protein uL3 (231 aa).

Position 151 is an N5-methylglutamine (Gln-151).

This sequence belongs to the universal ribosomal protein uL3 family. Part of the 50S ribosomal subunit. Forms a cluster with proteins L14 and L19. Methylated by PrmB.

In terms of biological role, one of the primary rRNA binding proteins, it binds directly near the 3'-end of the 23S rRNA, where it nucleates assembly of the 50S subunit. The chain is Large ribosomal subunit protein uL3 from Granulibacter bethesdensis (strain ATCC BAA-1260 / CGDNIH1).